Reading from the N-terminus, the 836-residue chain is Hypoxia-inducible factor 1-alpha (836 aa).

The interval 1 to 30 (MEGAGGENEKKKMSSERRKEKSRDAARSRR) is disordered. The tract at residues 1–401 (MEGAGGENEK…KEPDALTLLA (401 aa)) is interaction with TSGA10. Positions 7–30 (ENEKKKMSSERRKEKSRDAARSRR) are enriched in basic and acidic residues. The region spanning 17–70 (RRKEKSRDAARSRRSKESEVFYELAHQLPLPHNVSSHLDKASVMRLTISYLRVR) is the bHLH domain. Residues 21-30 (KSRDAARSRR) form a DNA-binding region. A PAS 1 domain is found at 80-155 (SEDEMKAQMD…EMLTHRNGPV (76 aa)). A required for heterodimer formation with ARNT region spans residues 170–191 (RMKCTLTSRGRTMNIKSATWKV). Residues 228 to 298 (PHPSNIEIPL…KTHHDMFTKG (71 aa)) enclose the PAS 2 domain. Serine 247 bears the Phosphoserine; by CK1 mark. The region spanning 302-345 (TGQYRMLAKRGGYVWVETQATVIYNTKNSQPQCIVCVNYVVSGI) is the PAC domain. Residues 380–417 (SEDTSCLFDKLKKEPDALTLLAPAAGDTIISLDFGSDD) form an N-terminal VHL recognition site region. Residue lysine 391 forms a Glycyl lysine isopeptide (Lys-Gly) (interchain with G-Cter in SUMO) linkage. Residues 401–613 (APAAGDTIIS…PSMSTVTGFQ (213 aa)) form an ODD region. Residue proline 402 is modified to 4-hydroxyproline. A Glycyl lysine isopeptide (Lys-Gly) (interchain with G-Cter in SUMO) cross-link involves residue lysine 476. Residues 492–511 (QIQDQPASPSDGSTRQSSPE) form a disordered region. Positions 544 to 588 (FKLELVEKLFAEDTEAKNPFSTQDTDLDLEMLAPYIPMDDDFQLR) are NTAD. Lysine 545 carries the N6-acetyllysine; alternate modification. Residues lysine 545, lysine 551, and lysine 560 each participate in a glycyl lysine isopeptide (Lys-Gly) (interchain with G-Cter in ubiquitin) cross-link. Lysine 545 is covalently cross-linked (Glycyl lysine isopeptide (Lys-Gly) (interchain with G-Cter in ubiquitin); alternate). The residue at position 564 (serine 564) is a Phosphoserine; by GSK3-beta. A Phosphothreonine; by GSK3-beta modification is found at threonine 568. Residues 569–585 (DLDLEMLAPYIPMDDDF) form a C-terminal VHL recognition site region. The residue at position 577 (proline 577) is a 4-hydroxyproline. Serine 589 carries the phosphoserine; by PLK3 modification. An ID region spans residues 589 to 795 (SFDQLSPLES…SDLACRLLGQ (207 aa)). Disordered stretches follow at residues 593 to 684 (LSPL…DRAG) and 707 to 734 (QRNT…KMEH). Serine 602 is subject to Phosphoserine; by GSK3-beta. Positions 608–620 (TVTGFQQTQLQKP) are enriched in polar residues. The span at 621–632 (TITATATTTATT) shows a compositional bias: low complexity. The span at 633 to 647 (DESKTETKDNKEDIK) shows a compositional bias: basic and acidic residues. Residues 652–678 (SPSSTQVPQETTTAKASAYSGTHSRTA) show a composition bias toward polar residues. The residue at position 668 (serine 668) is a Phosphoserine; by PLK3. Lysine 719 is subject to N6-acetyllysine. The Nuclear localization signal motif lies at 728–731 (RKRK). The segment at 796–836 (SMDESGLPQLTSYDCEVNAPIQGSRNLLQGEELLRALDQVN) is CTAD. Cysteine 810 carries the post-translational modification S-nitrosocysteine. (3S)-3-hydroxyasparagine is present on asparagine 813.

As to quaternary structure, interacts with the ARNT; forms a heterodimer that binds core DNA sequence 5'-TACGTG-3' within the hypoxia response element (HRE) of target gene promoters. Interacts with COPS5; the interaction increases the transcriptional activity of HIF1A through increased stability. Interacts with EP300 (via TAZ-type 1 domains); the interaction is stimulated in response to hypoxia and inhibited by CITED2. Interacts with CREBBP (via TAZ-type 1 domains). Interacts with NCOA1, NCOA2, APEX1 and HSP90. Interacts (hydroxylated within the ODD domain) with VHLL (via beta domain); the interaction, leads to polyubiquitination and subsequent HIF1A proteasomal degradation. During hypoxia, sumoylated HIF1A also binds VHL; the interaction promotes the ubiquitination of HIF1A. Interacts with SENP1; the interaction desumoylates HIF1A resulting in stabilization and activation of transcription. Interacts (via the ODD domain) with NAA10; the interaction appears not to acetylate HIF1A nor have any affect on protein stability, during hypoxia. Interacts with RWDD3; the interaction enhances HIF1A sumoylation. Interacts with TSGA10. Interacts with HIF3A. Interacts with RORA (via the DNA binding domain); the interaction enhances HIF1A transcription under hypoxia through increasing protein stability. Interaction with PSMA7 inhibits the transactivation activity of HIF1A under both normoxic and hypoxia-mimicking conditions. Interacts with USP20. Interacts with RACK1; promotes HIF1A ubiquitination and proteasome-mediated degradation. Interacts (via N-terminus) with USP19. Interacts with SIRT2. Interacts (deacetylated form) with EGLN1. Interacts with CBFA2T3. Interacts with HSP90AA1 and HSP90AB1. Interacts with DCUN1D1; this interaction increases the interaction between VHL and DCUN1D1. Interacts with HIF1AN. In terms of processing, S-nitrosylation of Cys-810 may be responsible for increased recruitment of p300 coactivator necessary for transcriptional activity of HIF-1 complex. Post-translationally, requires phosphorylation for DNA-binding. Phosphorylation at Ser-247 by CSNK1D/CK1 represses kinase activity and impairs ARNT binding. Phosphorylation by GSK3-beta and PLK3 promote degradation by the proteasome. Sumoylated; with SUMO1 under hypoxia. Sumoylation is enhanced through interaction with RWDD3. Both sumoylation and desumoylation seem to be involved in the regulation of its stability during hypoxia. Sumoylation can promote either its stabilization or its VHL-dependent degradation by promoting hydroxyproline-independent HIF1A-VHL complex binding, thus leading to HIF1A ubiquitination and proteasomal degradation. Desumoylation by SENP1 increases its stability amd transcriptional activity. There is a disaccord between various publications on the effect of sumoylation and desumoylation on its stability and transcriptional activity. In terms of processing, acetylation of Lys-545 by ARD1 increases interaction with VHL and stimulates subsequent proteasomal degradation. Deacetylation of Lys-719 by SIRT2 increases its interaction with and hydroxylation by EGLN1 thereby inactivating HIF1A activity by inducing its proteasomal degradation. Post-translationally, ubiquitinated; in normoxia, following hydroxylation and interaction with VHL. Lys-545 appears to be the principal site of ubiquitination. Clioquinol, the Cu/Zn-chelator, inhibits ubiquitination through preventing hydroxylation at Asn-813. Ubiquitinated by E3 ligase VHL. Deubiquitinated by UCHL1. The iron and 2-oxoglutarate dependent 3-hydroxylation of asparagine is (S) stereospecific within HIF CTAD domains. In terms of processing, in normoxia, is hydroxylated on Pro-402 and Pro-577 in the oxygen-dependent degradation domain (ODD) by EGLN1/PHD2 and EGLN2/PHD1. EGLN3/PHD3 has also been shown to hydroxylate Pro-577. The hydroxylated prolines promote interaction with VHL, initiating rapid ubiquitination and subsequent proteasomal degradation. Deubiquitinated by USP20. Under hypoxia, proline hydroxylation is impaired and ubiquitination is attenuated, resulting in stabilization. In normoxia, is hydroxylated on Asn-813 by HIF1AN, thus abrogating interaction with CREBBP and EP300 and preventing transcriptional activation. Repressed by iron ion, via Fe(2+) prolyl hydroxylase (PHD) enzymes-mediated hydroxylation and subsequent proteasomal degradation. As to expression, ubiquitous.

It localises to the cytoplasm. It is found in the nucleus. Its subcellular location is the nucleus speckle. Induced by reactive oxygen species (ROS). Functionally, functions as a master transcriptional regulator of the adaptive response to hypoxia. Under hypoxic conditions, activates the transcription of over 40 genes, including erythropoietin, glucose transporters, glycolytic enzymes, vascular endothelial growth factor, HILPDA, and other genes whose protein products increase oxygen delivery or facilitate metabolic adaptation to hypoxia. Plays an essential role in embryonic vascularization, tumor angiogenesis and pathophysiology of ischemic disease. Heterodimerizes with ARNT; heterodimer binds to core DNA sequence 5'-TACGTG-3' within the hypoxia response element (HRE) of target gene promoters. Activation requires recruitment of transcriptional coactivators such as CREBBP and EP300. Activity is enhanced by interaction with NCOA1 and/or NCOA2. Interaction with redox regulatory protein APEX1 seems to activate CTAD and potentiates activation by NCOA1 and CREBBP. Involved in the axonal distribution and transport of mitochondria in neurons during hypoxia. This chain is Hypoxia-inducible factor 1-alpha (Hif1a), found in Mus musculus (Mouse).